Here is a 398-residue protein sequence, read N- to C-terminus: Acetate kinase 1 (398 aa).

Position 10 (Asn-10) interacts with Mg(2+). Residue Lys-17 coordinates ATP. Arg-89 provides a ligand contact to substrate. The Proton donor/acceptor role is filled by Asp-146. Residues 206-210 (HLGNG), 281-283 (DCR), and 329-333 (GIGEN) each bind ATP. Residue Glu-384 participates in Mg(2+) binding.

It belongs to the acetokinase family. In terms of assembly, homodimer. It depends on Mg(2+) as a cofactor. The cofactor is Mn(2+).

Its subcellular location is the cytoplasm. It carries out the reaction acetate + ATP = acetyl phosphate + ADP. Its pathway is metabolic intermediate biosynthesis; acetyl-CoA biosynthesis; acetyl-CoA from acetate: step 1/2. In terms of biological role, catalyzes the formation of acetyl phosphate from acetate and ATP. Can also catalyze the reverse reaction. The chain is Acetate kinase 1 from Neisseria meningitidis serogroup B (strain ATCC BAA-335 / MC58).